The following is a 267-amino-acid chain: Glucosamine-6-phosphate deaminase (267 aa).

Asp72 serves as the catalytic Proton acceptor; for enolization step. Asp141 functions as the For ring-opening step in the catalytic mechanism. Residue His143 is the Proton acceptor; for ring-opening step of the active site. Glu148 serves as the catalytic For ring-opening step.

The protein belongs to the glucosamine/galactosamine-6-phosphate isomerase family. NagB subfamily. Homohexamer.

The enzyme catalyses alpha-D-glucosamine 6-phosphate + H2O = beta-D-fructose 6-phosphate + NH4(+). Its pathway is amino-sugar metabolism; N-acetylneuraminate degradation; D-fructose 6-phosphate from N-acetylneuraminate: step 5/5. Allosterically activated by N-acetylglucosamine 6-phosphate (GlcNAc6P). In terms of biological role, catalyzes the reversible isomerization-deamination of glucosamine 6-phosphate (GlcN6P) to form fructose 6-phosphate (Fru6P) and ammonium ion. This chain is Glucosamine-6-phosphate deaminase, found in Actinobacillus pleuropneumoniae serotype 5b (strain L20).